The following is a 66-amino-acid chain: uncharacterized protein (66 aa).

Residues 1–21 are disordered; the sequence is MPGGDRTGPWGQGPRTGRRAG.

This is an uncharacterized protein from Archaeoglobus fulgidus (strain ATCC 49558 / DSM 4304 / JCM 9628 / NBRC 100126 / VC-16).